Consider the following 863-residue polypeptide: NACHT, LRR and PYD domains-containing protein 4B (863 aa).

The region spanning 1–93 (MASLFSDFGF…TNRATGEIAA (93 aa)) is the Pyrin domain. In terms of domain architecture, NACHT spans 143–466 (KMVVLQGVAG…FYLLHSEMDH (324 aa)). Residue 149 to 156 (GVAGIGKT) coordinates ATP. LRR repeat units follow at residues 618 to 643 (WHQI…IFNE), 683 to 706 (SYNL…MLCD), 717 to 740 (ILDL…LRQN), 741 to 763 (KSLR…ALCR), 765 to 782 (LTLP…ACQL), 797 to 824 (YKCL…AMKD), and 843 to 863 (SQEF…ENGV).

This sequence belongs to the NLRP family.

In terms of biological role, may be involved in inflammation and recognition of cytosolic pathogen-associated molecular patterns (PAMPs) not intercepted by membrane-bound receptors. In Mus musculus (Mouse), this protein is NACHT, LRR and PYD domains-containing protein 4B (Nlrp4b).